The primary structure comprises 241 residues: 2-C-methyl-D-erythritol 4-phosphate cytidylyltransferase (241 aa).

This sequence belongs to the IspD/TarI cytidylyltransferase family. IspD subfamily.

It carries out the reaction 2-C-methyl-D-erythritol 4-phosphate + CTP + H(+) = 4-CDP-2-C-methyl-D-erythritol + diphosphate. It functions in the pathway isoprenoid biosynthesis; isopentenyl diphosphate biosynthesis via DXP pathway; isopentenyl diphosphate from 1-deoxy-D-xylulose 5-phosphate: step 2/6. Its function is as follows. Catalyzes the formation of 4-diphosphocytidyl-2-C-methyl-D-erythritol from CTP and 2-C-methyl-D-erythritol 4-phosphate (MEP). This Pseudoalteromonas translucida (strain TAC 125) protein is 2-C-methyl-D-erythritol 4-phosphate cytidylyltransferase.